Here is a 417-residue protein sequence, read N- to C-terminus: uncharacterized protein (417 aa).

The helical transmembrane segment at 10–30 (ALVCFSILSILVLACGCVNTP) threads the bilayer. Residues 84-106 (QENHPLQSNQNYEQTNGNFNEEN) form a disordered region. The span at 86-106 (NHPLQSNQNYEQTNGNFNEEN) shows a compositional bias: polar residues. The helical transmembrane segment at 148–168 (LYYIKVIDPIVGGLAGIDIYV) threads the bilayer.

It is found in the cell membrane. This is an uncharacterized protein from Methanocaldococcus jannaschii (strain ATCC 43067 / DSM 2661 / JAL-1 / JCM 10045 / NBRC 100440) (Methanococcus jannaschii).